The following is a 522-amino-acid chain: WEB family protein At2g38370 (522 aa).

The disordered stretch occupies residues 1–32 (MAEFPEPGTVNPDSDLSNGRAEKPEIDTSAPF). Coiled-coil stretches lie at residues 77 to 264 (ELQR…AARE) and 299 to 376 (ARSA…RSEN). Disordered stretches follow at residues 374-397 (SENG…SRRE) and 458-493 (MSLG…RKRK). Basic and acidic residues predominate over residues 473 to 486 (TVSKRSEGKENEKR).

The protein belongs to the WEB family.

The chain is WEB family protein At2g38370 from Arabidopsis thaliana (Mouse-ear cress).